The sequence spans 320 residues: GTPase Era (320 aa).

Positions histidine 25–lysine 193 constitute an Era-type G domain. The tract at residues glycine 33–serine 40 is G1. Glycine 33 to serine 40 is a GTP binding site. Residues glutamine 59–histidine 63 form a G2 region. The interval aspartate 80–glycine 83 is G3. GTP contacts are provided by residues aspartate 80–leucine 84 and asparagine 142–aspartate 145. The tract at residues asparagine 142–aspartate 145 is G4. Residues isoleucine 172–alanine 174 are G5. Residues valine 216–serine 302 enclose the KH type-2 domain.

This sequence belongs to the TRAFAC class TrmE-Era-EngA-EngB-Septin-like GTPase superfamily. Era GTPase family. As to quaternary structure, monomer.

The protein localises to the cytoplasm. The protein resides in the cell inner membrane. Its function is as follows. An essential GTPase that binds both GDP and GTP, with rapid nucleotide exchange. Plays a role in 16S rRNA processing and 30S ribosomal subunit biogenesis and possibly also in cell cycle regulation and energy metabolism. This Vibrio parahaemolyticus serotype O3:K6 (strain RIMD 2210633) protein is GTPase Era.